Consider the following 417-residue polypeptide: Serine hydroxymethyltransferase (417 aa).

(6S)-5,6,7,8-tetrahydrofolate is bound by residues leucine 116 and 120–122 (GHL). Lysine 225 carries the N6-(pyridoxal phosphate)lysine modification. 350–352 (SPF) contributes to the (6S)-5,6,7,8-tetrahydrofolate binding site.

This sequence belongs to the SHMT family. In terms of assembly, homodimer. The cofactor is pyridoxal 5'-phosphate.

The protein resides in the cytoplasm. It catalyses the reaction (6R)-5,10-methylene-5,6,7,8-tetrahydrofolate + glycine + H2O = (6S)-5,6,7,8-tetrahydrofolate + L-serine. It participates in one-carbon metabolism; tetrahydrofolate interconversion. Its pathway is amino-acid biosynthesis; glycine biosynthesis; glycine from L-serine: step 1/1. Catalyzes the reversible interconversion of serine and glycine with tetrahydrofolate (THF) serving as the one-carbon carrier. This reaction serves as the major source of one-carbon groups required for the biosynthesis of purines, thymidylate, methionine, and other important biomolecules. Also exhibits THF-independent aldolase activity toward beta-hydroxyamino acids, producing glycine and aldehydes, via a retro-aldol mechanism. The sequence is that of Serine hydroxymethyltransferase from Ligilactobacillus salivarius (strain UCC118) (Lactobacillus salivarius).